The primary structure comprises 265 residues: uncharacterized protein (265 aa).

It localises to the mitochondrion. This is an uncharacterized protein from Paramecium tetraurelia.